The chain runs to 71 residues: Large ribosomal subunit protein bL31 (71 aa).

The Zn(2+) site is built by cysteine 16, cysteine 18, cysteine 37, and cysteine 40.

Belongs to the bacterial ribosomal protein bL31 family. Type A subfamily. In terms of assembly, part of the 50S ribosomal subunit. The cofactor is Zn(2+).

Binds the 23S rRNA. The polypeptide is Large ribosomal subunit protein bL31 (Chromohalobacter salexigens (strain ATCC BAA-138 / DSM 3043 / CIP 106854 / NCIMB 13768 / 1H11)).